We begin with the raw amino-acid sequence, 59 residues long: Large ribosomal subunit protein bL35 (59 aa).

A compositionally biased stretch (basic residues) spans 17–43 (GQIKRKHAYTSHLAPHKSTKQKRHLRK). Residues 17 to 47 (GQIKRKHAYTSHLAPHKSTKQKRHLRKQATV) are disordered.

The protein belongs to the bacterial ribosomal protein bL35 family.

The chain is Large ribosomal subunit protein bL35 from Mycoplasma genitalium (strain ATCC 33530 / DSM 19775 / NCTC 10195 / G37) (Mycoplasmoides genitalium).